Here is a 283-residue protein sequence, read N- to C-terminus: Pantothenate synthetase (283 aa).

Residue 34–41 (MGALHDGH) coordinates ATP. The active-site Proton donor is histidine 41. Glutamine 65 serves as a coordination point for (R)-pantoate. Glutamine 65 lines the beta-alanine pocket. 152 to 155 (GSKD) provides a ligand contact to ATP. Glutamine 158 is a binding site for (R)-pantoate. ATP is bound by residues valine 181 and 189-192 (MSSR).

Belongs to the pantothenate synthetase family. As to quaternary structure, homodimer.

The protein resides in the cytoplasm. The catalysed reaction is (R)-pantoate + beta-alanine + ATP = (R)-pantothenate + AMP + diphosphate + H(+). It functions in the pathway cofactor biosynthesis; (R)-pantothenate biosynthesis; (R)-pantothenate from (R)-pantoate and beta-alanine: step 1/1. Functionally, catalyzes the condensation of pantoate with beta-alanine in an ATP-dependent reaction via a pantoyl-adenylate intermediate. The chain is Pantothenate synthetase from Rhodopseudomonas palustris (strain ATCC BAA-98 / CGA009).